A 70-amino-acid polypeptide reads, in one-letter code: Beta-defensin 107A (70 aa).

Residues 1–26 (MPGAMKIFFFIFAALILLAQIFQART) form the signal peptide. 2 disulfide bridges follow: Cys-41–Cys-55 and Cys-45–Cys-64.

It belongs to the beta-defensin family.

It localises to the secreted. In terms of biological role, has antibacterial activity. The chain is Beta-defensin 107A (DEFB107A) from Pan troglodytes (Chimpanzee).